Reading from the N-terminus, the 940-residue chain is UvrABC system protein A (940 aa).

Glycine 31–serine 38 contributes to the ATP binding site. The segment at cysteine 252–cysteine 279 adopts a C4-type zinc-finger fold. 2 consecutive ABC transporter domains span residues tryptophan 309–leucine 586 and arginine 606–lysine 936. Residue glycine 639–serine 646 coordinates ATP. The C4-type zinc finger occupies cysteine 739–cysteine 765.

Belongs to the ABC transporter superfamily. UvrA family. Forms a heterotetramer with UvrB during the search for lesions.

The protein localises to the cytoplasm. In terms of biological role, the UvrABC repair system catalyzes the recognition and processing of DNA lesions. UvrA is an ATPase and a DNA-binding protein. A damage recognition complex composed of 2 UvrA and 2 UvrB subunits scans DNA for abnormalities. When the presence of a lesion has been verified by UvrB, the UvrA molecules dissociate. The protein is UvrABC system protein A of Vibrio vulnificus (strain YJ016).